The following is a 296-amino-acid chain: 4-hydroxybenzoate octaprenyltransferase (296 aa).

Transmembrane regions (helical) follow at residues Ile-29–Val-49, Leu-55–Phe-75, Ala-102–Ala-122, Tyr-146–Ala-166, Gly-169–Tyr-189, Leu-219–Phe-239, Leu-241–Trp-261, and Phe-275–Leu-295.

This sequence belongs to the UbiA prenyltransferase family. Mg(2+) is required as a cofactor.

Its subcellular location is the cell inner membrane. It carries out the reaction all-trans-octaprenyl diphosphate + 4-hydroxybenzoate = 4-hydroxy-3-(all-trans-octaprenyl)benzoate + diphosphate. It functions in the pathway cofactor biosynthesis; ubiquinone biosynthesis. Its function is as follows. Catalyzes the prenylation of para-hydroxybenzoate (PHB) with an all-trans polyprenyl group. Mediates the second step in the final reaction sequence of ubiquinone-8 (UQ-8) biosynthesis, which is the condensation of the polyisoprenoid side chain with PHB, generating the first membrane-bound Q intermediate 3-octaprenyl-4-hydroxybenzoate. This Pseudomonas aeruginosa (strain UCBPP-PA14) protein is 4-hydroxybenzoate octaprenyltransferase.